The chain runs to 1171 residues: Kinesin-like protein GA13060 (1171 aa).

Residues 1-24 (MASSISRNGGFCGALQRAPPPMPP) are disordered. Positions 40–400 (KVKVMLRVSD…IQIASRIHRL (361 aa)) constitute a Kinesin motor domain. 5 disordered regions span residues 737–774 (LLGQ…GSRD), 798–820 (LVAS…SQRS), 932–955 (PAYR…SLPS), 1043–1099 (TSSE…QRHR), and 1124–1143 (RHSH…EGNG). The span at 805–816 (SSHHQHQHHRPS) shows a compositional bias: basic residues. The span at 1043-1059 (TSSEAYDSGHDSNSTPR) shows a compositional bias: polar residues. Basic residues predominate over residues 1124-1139 (RHSHGVGGHKKHRHRH).

Belongs to the TRAFAC class myosin-kinesin ATPase superfamily. Kinesin family. KIF26 subfamily.

It localises to the cytoplasm. The protein localises to the cytoskeleton. This chain is Kinesin-like protein GA13060, found in Drosophila pseudoobscura pseudoobscura (Fruit fly).